The primary structure comprises 116 residues: Large ribosomal subunit protein bL20c (116 aa).

It belongs to the bacterial ribosomal protein bL20 family.

It is found in the plastid. Its subcellular location is the chloroplast. Functionally, binds directly to 23S ribosomal RNA and is necessary for the in vitro assembly process of the 50S ribosomal subunit. It is not involved in the protein synthesizing functions of that subunit. The protein is Large ribosomal subunit protein bL20c (rpl20) of Marchantia polymorpha (Common liverwort).